Consider the following 1330-residue polypeptide: ESX-3 secretion system protein EccC3 (1330 aa).

The next 2 membrane-spanning stretches (helical) occupy residues 43–63 (LPYLIGILIVGMIVALVATGM) and 65–85 (VISPQTLFFPFVLLLAATALY). 3 FtsK domains span residues 456 to 662 (GEPL…SVSR), 811 to 1000 (RDPL…RDSN), and 1090 to 1280 (LAPV…ADSG). ATP contacts are provided by residues 479–486 (GMTGSGKS), 829–836 (GGPKSGKS), and 1107–1114 (GDARSGKT).

As to quaternary structure, part of the ESX-3 / type VII secretion system (T7SS), which is composed of cytosolic and membrane components. The ESX-3 membrane complex is composed of EccB3, EccC3, EccD3 and EccE3.

The protein localises to the cell inner membrane. In terms of biological role, part of the ESX-3 specialized secretion system, which is important for iron and zinc uptake or homeostasis. The sequence is that of ESX-3 secretion system protein EccC3 from Mycobacterium tuberculosis (strain CDC 1551 / Oshkosh).